The primary structure comprises 776 residues: Angiomotin-like protein 2 (776 aa).

Residues 41–88 are disordered; sequence GGAGAGGTGSPQASAEILAPEDTQVLQQATRQEPQGQEHQGGESHLAE. A required for interaction with CDH5 region spans residues 101–307; sequence GEELPTYEEA…STQTSSAPSG (207 aa). The residue at position 107 (Tyr-107) is a Phosphotyrosine. Disordered stretches follow at residues 119 to 142, 169 to 215, and 283 to 309; these read AQQA…GHRS, RNGA…QYPH, and GPLG…SGSA. Residues 177-192 show a composition bias toward polar residues; the sequence is HMSSSHSFPQLARNQQ. The span at 196–213 shows a compositional bias: pro residues; sequence PRGPPAEGPEPRGPPPQY. Positions 220 to 307 are required for interaction with CDH1; that stretch reads HETATAVTDP…STQTSSAPSG (88 aa). A compositionally biased stretch (polar residues) spans 297–306; it reads ASTQTSSAPS. Coiled coils occupy residues 314 to 509 and 543 to 570; these read METL…LELR and ALRL…WEQK. Glycyl lysine isopeptide (Lys-Gly) (interchain with G-Cter in ubiquitin) cross-links involve residues Lys-347 and Lys-408. Disordered stretches follow at residues 591 to 620 and 677 to 743; these read QRDT…GHRH and TQGW…LDPD. The segment covering 678–687 has biased composition (polar residues); the sequence is QGWQSLSSSE. Phosphoserine occurs at positions 756 and 759. A PDZ-binding motif is present at residues 773 to 776; sequence EILI.

Belongs to the angiomotin family. Part of a complex composed of AMOTL2, MAGI1 and CDH5, within the complex AMOTL2 acts as a scaffold protein for the interaction of MAGI1 with CDH5. The complex is required for coupling actin fibers to cell junctions in endothelial cells. Within the complex AMOTL2 (via its N-terminus) interacts with CDH5. Interacts (via N-terminus) with MAGI1. Interacts (via N-terminus) with ACTB; the interaction facilitates binding of cell junction complexes to actin fibers in endothelial cells. Interacts with CDH1; the interaction may facilitate binding of radial actin fibers to cell junction complexes. Interacts with SRC. Interacts with YAP1; the interaction is required for ubiquitination of AMOTL2 and localization of YAP1 to tight junctions. Interacts with WWP1; the interaction facilitates WWP1 interaction with the Crumbs complex and subsequent WWP1 translocation to the plasma membrane. WPP1 interaction with the Crumbs complex promotes WPP1 monoubiquitination of AMOTL2 which subsequently activates the Hippo signaling pathway. When ubiquitinated interacts with LATS2 (via UBA domain); the interaction promotes LATS2 phosphorylation of YAP1. Interacts (via PPXY motif) with WWTR1/TAZ (via WW domain); the interaction promotes WWTR1/TAZ localization to the cytoplasm and thereby inhibition of its transcriptional properties. Interacts with PHLDB2; interaction may facilitate PHLDB2 localization to the myotube podosome cortex that surrounds the core. Monoubiquitinated at Lys-347 and Lys-408 by Crumbs complex-bound WWP1. De-ubiquitinated at Lys-347 and Lys-408 by USP9X; the interaction may be promoted by cell contact inhibition. Deubiquitination of AMOTL2 negatively regulates Hippo signaling activation. In terms of processing, phosphorylation at Tyr-107 is necessary for efficient binding to SRC and synergistically functioning with SRC to activate the downstream MAPK pathway.

The protein localises to the recycling endosome. It is found in the cytoplasm. The protein resides in the cell projection. It localises to the podosome. Its subcellular location is the cell junction. Its function is as follows. Regulates the translocation of phosphorylated SRC to peripheral cell-matrix adhesion sites. Required for proper architecture of actin filaments. Plays a role in coupling actin fibers to cell junctions in endothelial cells and is therefore required for correct endothelial cell morphology via facilitating transcellular transmission of mechanical force resulting in endothelial cell elongation. Required for the anchoring of radial actin fibers to CDH1 junction complexes at the cell membrane which facilitates organization of radial actin fiber structure and cellular response to contractile forces. This contributes to maintenance of cell area, size, shape, epithelial sheet organization and trophectoderm cell properties that facilitate blastocyst zona hatching. Inhibits the Wnt/beta-catenin signaling pathway, probably by recruiting CTNNB1 to recycling endosomes and hence preventing its translocation to the nucleus. Participates in angiogenesis. Activates the Hippo signaling pathway in response to cell contact inhibition via interaction with and ubiquitination by Crumbs complex-bound WWP1. Ubiquitinated AMOTL2 then interacts with LATS2 which in turn phosphorylates YAP1, excluding it from the nucleus and localizing it to the cytoplasm and tight junctions, therefore ultimately repressing YAP1-driven transcription of target genes. Acts to inhibit WWTR1/TAZ transcriptional coactivator activity via sequestering WWTR1/TAZ in the cytoplasm and at tight junctions. Regulates the size and protein composition of the podosome cortex and core at myofibril neuromuscular junctions. Selectively promotes FGF-induced MAPK activation through SRC. May play a role in the polarity, proliferation and migration of endothelial cells. This Canis lupus familiaris (Dog) protein is Angiomotin-like protein 2.